The following is a 493-amino-acid chain: Galactose-1-phosphate uridylyltransferase (493 aa).

This sequence belongs to the galactose-1-phosphate uridylyltransferase type 2 family.

The protein resides in the cytoplasm. The enzyme catalyses alpha-D-galactose 1-phosphate + UDP-alpha-D-glucose = alpha-D-glucose 1-phosphate + UDP-alpha-D-galactose. It participates in carbohydrate metabolism; galactose metabolism. The chain is Galactose-1-phosphate uridylyltransferase from Streptococcus pneumoniae (strain Hungary19A-6).